The chain runs to 245 residues: DNA polymerase sliding clamp (245 aa).

It belongs to the PCNA family. As to quaternary structure, homotrimer. The subunits circularize to form a toroid; DNA passes through its center. Replication factor C (RFC) is required to load the toroid on the DNA.

Its function is as follows. Sliding clamp subunit that acts as a moving platform for DNA processing. Responsible for tethering the catalytic subunit of DNA polymerase and other proteins to DNA during high-speed replication. This chain is DNA polymerase sliding clamp, found in Methanosarcina barkeri (strain Fusaro / DSM 804).